A 250-amino-acid chain; its full sequence is Acyl-coenzyme A diphosphatase fit1 (250 aa).

The Cytoplasmic segment spans residues 1 to 23 (MTEKTASHYWNEETSILKLRRKD). A helical transmembrane segment spans residues 24–44 (ILLFEIYATTLLLGSIYSIYV). Over 45 to 58 (DKWSITSYFGNSKN) the chain is Lumenal. Residues 59–79 (LINLIFVKRGWFWTSLVYFYH) form a helical membrane-spanning segment. The Cytoplasmic portion of the chain corresponds to 80–95 (AWDQKRNKIDFKFISR). A helical transmembrane segment spans residues 96–116 (YIVATLWWMFVTQWFIGPGLI). At 117 to 160 (DRTFALSGGSCKNFDGDSSVFIPLTASTCKGLNGSWSGGHDLSG) the chain is on the lumenal side. An N-linked (GlcNAc...) asparagine glycan is attached at Asn-149. His-161 is an active-site residue. The chain crosses the membrane as a helical span at residues 161–181 (HVFLLTHSSLFMLSENFSFIL). The Cytoplasmic segment spans residues 182-191 (NNGIKATSTK). Residues 192 to 212 (VLFGLLGLWWWMLFVTASFYH) traverse the membrane as a helical segment. The active site involves His-212. Position 213 (Thr-213) is a topological domain, lumenal. The helical transmembrane segment at 214 to 234 (TFEKCTGFFSGILEWSIVYVF) threads the bilayer. At 235–250 (SSRMPAVADLLGSSDY) the chain is on the cytoplasmic side.

The protein belongs to the FIT family. Fungal FIT2B/SCS3 subfamily.

The protein resides in the endoplasmic reticulum membrane. The catalysed reaction is an acyl-CoA + H2O = an acyl-4'-phosphopantetheine + adenosine 3',5'-bisphosphate + 2 H(+). The enzyme catalyses (9Z)-octadecenoyl-CoA + H2O = S-(9Z-octadecenoyl)-4'-phosphopantetheine + adenosine 3',5'-bisphosphate + 2 H(+). It catalyses the reaction (5Z,8Z,11Z,14Z)-eicosatetraenoyl-CoA + H2O = S-(5Z,8Z,11Z,14Z-eicosatetraenoyl)-4'-phosphopantetheine + adenosine 3',5'-bisphosphate + 2 H(+). It carries out the reaction hexadecanoyl-CoA + H2O = S-hexadecanoyl-4'-phosphopantetheine + adenosine 3',5'-bisphosphate + 2 H(+). Its function is as follows. Fatty acyl-coenzyme A (CoA) diphosphatase that hydrolyzes fatty acyl-CoA to yield acyl-4'-phosphopantetheine and adenosine 3',5'-bisphosphate. Preferentially hydrolyzes unsaturated long-chain acyl-CoA substrates in the endoplasmic reticulum (ER) lumen. This catalytic activity is required for maintaining ER structure and for lipid droplets (LDs) biogenesis, which are lipid storage organelles involved in maintaining lipid and energy homeostasis. May directly bind to diacylglycerol (DAGs) and triacylglycerol, which is also important for LD biogenesis. May support directional budding of nacent LDs from the ER into the cytosol by reducing DAG levels at sites of LD formation. May play a role in the regulation of cell morphology and cytoskeletal organization. This chain is Acyl-coenzyme A diphosphatase fit1, found in Schizosaccharomyces pombe (strain 972 / ATCC 24843) (Fission yeast).